The sequence spans 1170 residues: Disease resistance protein LAZ5 (1170 aa).

Residues 10-172 (ESWQVFINFR…KIIDSIKKVL (163 aa)) enclose the TIR domain. Glu84 is an active-site residue. Residues 193–219 (EAKNVDTFSPNSSDFPSTSIDDDLSIN) form a disordered region. The segment covering 198–219 (DTFSPNSSDFPSTSIDDDLSIN) has biased composition (polar residues). In terms of domain architecture, NB-ARC spans 261–513 (RLKEMEEKLD…DVACFFKSEN (253 aa)). LRR repeat units lie at residues 595–616 (MENV…TFDG), 622–645 (MCNL…IFKF), 646–670 (DTVR…PWEK), 677–700 (PENL…VKDT), 723–747 (AKNL…MENM), 761–785 (LTCL…KLEE), 790–813 (SENL…AGDL), 815–837 (RLVV…LGKQ), 838–861 (KALQ…VKDM), 862–885 (KHLR…SLKC), 888–904 (LSRN…LKDF), and 905–930 (SNLK…CLEY).

The enzyme catalyses NAD(+) + H2O = ADP-D-ribose + nicotinamide + H(+). Its function is as follows. TIR-NB-LRR receptor-like protein that may play a role in plant innate immunity. May trigger hypersensitive programmed cell death in response to pathogen attack. Involved in tolerance to tobacco ringspot virus (TRSV). In Arabidopsis thaliana (Mouse-ear cress), this protein is Disease resistance protein LAZ5.